The primary structure comprises 265 residues: Hydroxyethylthiazole kinase 2 (265 aa).

Met-39 contributes to the substrate binding site. Lys-115 and Thr-168 together coordinate ATP. Position 195 (Gly-195) interacts with substrate.

This sequence belongs to the Thz kinase family. Mg(2+) serves as cofactor.

The enzyme catalyses 5-(2-hydroxyethyl)-4-methylthiazole + ATP = 4-methyl-5-(2-phosphooxyethyl)-thiazole + ADP + H(+). It functions in the pathway cofactor biosynthesis; thiamine diphosphate biosynthesis; 4-methyl-5-(2-phosphoethyl)-thiazole from 5-(2-hydroxyethyl)-4-methylthiazole: step 1/1. In terms of biological role, catalyzes the phosphorylation of the hydroxyl group of 4-methyl-5-beta-hydroxyethylthiazole (THZ). The protein is Hydroxyethylthiazole kinase 2 of Clostridium botulinum (strain Okra / Type B1).